Reading from the N-terminus, the 716-residue chain is Amino-acid acetyltransferase, mitochondrial (716 aa).

Residues 1–44 (MSPHTGWPRTVNSSLLKKHRSSLCTCQHTSSFLPRSFSTTADRH) constitute a mitochondrion transit peptide. 2 disordered regions span residues 99-119 (YPKSPDENKPEPEKLATAPTL) and 487-508 (LSSSLPMSRRGPTNNGQGTVYP). The segment covering 102–112 (SPDENKPEPEK) has biased composition (basic and acidic residues). The segment covering 497–508 (GPTNNGQGTVYP) has biased composition (polar residues). An N-acetyltransferase domain is found at 537-706 (SRPRLKLDDP…YEAVCRSTQP (170 aa)).

This sequence belongs to the acetyltransferase family.

The protein localises to the mitochondrion. It carries out the reaction L-glutamate + acetyl-CoA = N-acetyl-L-glutamate + CoA + H(+). Its pathway is amino-acid biosynthesis; L-arginine biosynthesis; N(2)-acetyl-L-ornithine from L-glutamate: step 1/4. N-acetylglutamate synthase involved in arginine biosynthesis. The chain is Amino-acid acetyltransferase, mitochondrial (arg2) from Neosartorya fischeri (strain ATCC 1020 / DSM 3700 / CBS 544.65 / FGSC A1164 / JCM 1740 / NRRL 181 / WB 181) (Aspergillus fischerianus).